Consider the following 361-residue polypeptide: Chorismate synthase (361 aa).

NADP(+)-binding residues include R48 and R54. Residues 125–127, 238–239, G278, 293–297, and R319 each bind FMN; these read RSS, NA, and KPTSS.

It belongs to the chorismate synthase family. Homotetramer. The cofactor is FMNH2.

It catalyses the reaction 5-O-(1-carboxyvinyl)-3-phosphoshikimate = chorismate + phosphate. The protein operates within metabolic intermediate biosynthesis; chorismate biosynthesis; chorismate from D-erythrose 4-phosphate and phosphoenolpyruvate: step 7/7. Its function is as follows. Catalyzes the anti-1,4-elimination of the C-3 phosphate and the C-6 proR hydrogen from 5-enolpyruvylshikimate-3-phosphate (EPSP) to yield chorismate, which is the branch point compound that serves as the starting substrate for the three terminal pathways of aromatic amino acid biosynthesis. This reaction introduces a second double bond into the aromatic ring system. The protein is Chorismate synthase of Vibrio campbellii (strain ATCC BAA-1116).